The sequence spans 115 residues: LSALLNTSILLRSGVTVTWAHHALMENNFDQCLQGLLFTVLLGLYFSFLQGLEYMEASFTIADSIYGSTFFLATGFHGLHVLIGTIFLMICILRHLSATFSQHHFGFEAAAWYWH.

Helical transmembrane passes span 32–52 and 70–90; these read CLQG…LQGL and FFLA…FLMI.

The protein belongs to the cytochrome c oxidase subunit 3 family. Component of the cytochrome c oxidase (complex IV, CIV), a multisubunit enzyme composed of a catalytic core of 3 subunits and several supernumerary subunits. The complex exists as a monomer or a dimer and forms supercomplexes (SCs) in the inner mitochondrial membrane with ubiquinol-cytochrome c oxidoreductase (cytochrome b-c1 complex, complex III, CIII).

It is found in the mitochondrion inner membrane. The catalysed reaction is 4 Fe(II)-[cytochrome c] + O2 + 8 H(+)(in) = 4 Fe(III)-[cytochrome c] + 2 H2O + 4 H(+)(out). Its function is as follows. Component of the cytochrome c oxidase, the last enzyme in the mitochondrial electron transport chain which drives oxidative phosphorylation. The respiratory chain contains 3 multisubunit complexes succinate dehydrogenase (complex II, CII), ubiquinol-cytochrome c oxidoreductase (cytochrome b-c1 complex, complex III, CIII) and cytochrome c oxidase (complex IV, CIV), that cooperate to transfer electrons derived from NADH and succinate to molecular oxygen, creating an electrochemical gradient over the inner membrane that drives transmembrane transport and the ATP synthase. Cytochrome c oxidase is the component of the respiratory chain that catalyzes the reduction of oxygen to water. Electrons originating from reduced cytochrome c in the intermembrane space (IMS) are transferred via the dinuclear copper A center (CU(A)) of subunit 2 and heme A of subunit 1 to the active site in subunit 1, a binuclear center (BNC) formed by heme A3 and copper B (CU(B)). The BNC reduces molecular oxygen to 2 water molecules using 4 electrons from cytochrome c in the IMS and 4 protons from the mitochondrial matrix. In Artemia salina (Brine shrimp), this protein is Cytochrome c oxidase subunit 3 (COIII).